A 741-amino-acid polypeptide reads, in one-letter code: Exostosin-1b (741 aa).

The Cytoplasmic segment spans residues 1–7 (MQAKKRY). Residues 8–28 (LISLLTGAFLVLLIYLGGGGV) traverse the membrane as a helical; Signal-anchor for type II membrane protein segment. Residues 29-741 (PGPAAPGSRS…RKKYREIERL (713 aa)) lie on the Lumenal side of the membrane. Residues N84 and N325 are each glycosylated (N-linked (GlcNAc...) asparagine). UDP-N-acetyl-alpha-D-glucosamine-binding residues include R435, R544, D560, E561, D562, E648, D649, and R696. A Mn(2+)-binding site is contributed by D562. A disulfide bridge links C647 with C699. Residue D649 is part of the active site.

This sequence belongs to the glycosyltransferase 47 family. Mn(2+) serves as cofactor.

It is found in the endoplasmic reticulum membrane. It catalyses the reaction 3-O-{[(1-&gt;4)-beta-D-GlcA-(1-&gt;4)-alpha-D-GlcNAc](n)-(1-&gt;4)-beta-D-GlcA-(1-&gt;3)-beta-D-Gal-(1-&gt;3)-beta-D-Gal-(1-&gt;4)-beta-D-Xyl}-L-seryl-[protein] + UDP-N-acetyl-alpha-D-glucosamine = 3-O-{alpha-D-GlcNAc-[(1-&gt;4)-beta-D-GlcA-(1-&gt;4)-alpha-D-GlcNAc](n)-(1-&gt;4)-beta-D-GlcA-(1-&gt;3)-beta-D-Gal-(1-&gt;3)-beta-D-Gal-(1-&gt;4)-beta-D-Xyl}-L-seryl-[protein] + UDP + H(+). It carries out the reaction 3-O-{alpha-D-GlcNAc-[(1-&gt;4)-beta-D-GlcA-(1-&gt;4)-alpha-D-GlcNAc](n)-(1-&gt;4)-beta-D-GlcA-(1-&gt;3)-beta-D-Gal-(1-&gt;3)-beta-D-Gal-(1-&gt;4)-beta-D-Xyl}-L-seryl-[protein] + UDP-alpha-D-glucuronate = 3-O-{[(1-&gt;4)-beta-D-GlcA-(1-&gt;4)-alpha-D-GlcNAc](n+1)-(1-&gt;4)-beta-D-GlcA-(1-&gt;3)-beta-D-Gal-(1-&gt;3)-beta-D-Gal-(1-&gt;4)-beta-D-Xyl}-L-seryl-[protein] + UDP + H(+). The protein operates within protein modification; protein glycosylation. Its function is as follows. Glycosyltransferase required for the biosynthesis of heparan-sulfate. In Danio rerio (Zebrafish), this protein is Exostosin-1b (ext1b).